We begin with the raw amino-acid sequence, 72 residues long: Translation initiation factor IF-1 2 (72 aa).

The S1-like domain maps to 1-72 (MAKEDAIEVD…KRGRITYRMK (72 aa)).

It belongs to the IF-1 family. As to quaternary structure, component of the 30S ribosomal translation pre-initiation complex which assembles on the 30S ribosome in the order IF-2 and IF-3, IF-1 and N-formylmethionyl-tRNA(fMet); mRNA recruitment can occur at any time during PIC assembly.

Its subcellular location is the cytoplasm. In terms of biological role, one of the essential components for the initiation of protein synthesis. Stabilizes the binding of IF-2 and IF-3 on the 30S subunit to which N-formylmethionyl-tRNA(fMet) subsequently binds. Helps modulate mRNA selection, yielding the 30S pre-initiation complex (PIC). Upon addition of the 50S ribosomal subunit IF-1, IF-2 and IF-3 are released leaving the mature 70S translation initiation complex. The sequence is that of Translation initiation factor IF-1 2 from Nitratidesulfovibrio vulgaris (strain DP4) (Desulfovibrio vulgaris).